The primary structure comprises 437 residues: Tol-Pal system protein TolB (437 aa).

The N-terminal stretch at 1-23 (MQKRHPIIYLLITLLIFVPVSYG) is a signal peptide.

It belongs to the TolB family. As to quaternary structure, the Tol-Pal system is composed of five core proteins: the inner membrane proteins TolA, TolQ and TolR, the periplasmic protein TolB and the outer membrane protein Pal. They form a network linking the inner and outer membranes and the peptidoglycan layer.

The protein resides in the periplasm. Functionally, part of the Tol-Pal system, which plays a role in outer membrane invagination during cell division and is important for maintaining outer membrane integrity. In Coxiella burnetii (strain RSA 493 / Nine Mile phase I), this protein is Tol-Pal system protein TolB.